We begin with the raw amino-acid sequence, 153 residues long: D-aminoacyl-tRNA deacylase (153 aa).

A Gly-cisPro motif, important for rejection of L-amino acids motif is present at residues 137-138 (GP).

The protein belongs to the DTD family. As to quaternary structure, homodimer.

Its subcellular location is the cytoplasm. The catalysed reaction is glycyl-tRNA(Ala) + H2O = tRNA(Ala) + glycine + H(+). It carries out the reaction a D-aminoacyl-tRNA + H2O = a tRNA + a D-alpha-amino acid + H(+). Its function is as follows. An aminoacyl-tRNA editing enzyme that deacylates mischarged D-aminoacyl-tRNAs. Also deacylates mischarged glycyl-tRNA(Ala), protecting cells against glycine mischarging by AlaRS. Acts via tRNA-based rather than protein-based catalysis; rejects L-amino acids rather than detecting D-amino acids in the active site. By recycling D-aminoacyl-tRNA to D-amino acids and free tRNA molecules, this enzyme counteracts the toxicity associated with the formation of D-aminoacyl-tRNA entities in vivo and helps enforce protein L-homochirality. In Dehalococcoides mccartyi (strain ATCC BAA-2100 / JCM 16839 / KCTC 5957 / BAV1), this protein is D-aminoacyl-tRNA deacylase.